Consider the following 443-residue polypeptide: Protein SCAR (443 aa).

The tract at residues 1–96 is interaction with brk1 and abiA; it reads MVLITRYLPS…DYHRNTSIDT (96 aa). Residues 166-201 are a coiled coil; that stretch reads VAEQQKLHEEARQRKRERREARLKKKGEKNEVEVKK. 2 disordered regions span residues 176–197 and 220–386; these read ARQR…KNEV and INIE…RSDL. Over residues 178-192 the composition is skewed to basic residues; that stretch reads QRKRERREARLKKKG. Over residues 221-252 the composition is skewed to polar residues; sequence NIESPHTSSPQIQHQSNNTATPQHTTQHFGTN. 2 stretches are compositionally biased toward low complexity: residues 263-277 and 285-305; these read SQSS…INSY and NTST…TGFN. Residues 306 to 323 show a composition bias toward pro residues; that stretch reads TPPPPMSNNNNMPPPPPM. Over residues 324-338 the composition is skewed to polar residues; that stretch reads QQNGGAANNRLSVHN. A compositionally biased stretch (pro residues) spans 346 to 365; the sequence is PAPPPPPPPPSAPAPPPPPM. A WH2 domain is found at 382–399; the sequence is ARSDLLSSIMQGMALKPA.

This sequence belongs to the SCAR/WAVE family. In terms of assembly, part of a Scar/WAVE complex containing brk1, scrA, abiA, pirA and napA. Interacts with brk1 and abiA.

Its subcellular location is the cytoplasm. It is found in the cytoskeleton. The protein resides in the cell projection. The protein localises to the pseudopodium tip. It localises to the filopodium tip. Involved in regulation of actin and microtubule organization. Regulates phagocytosis and macropinocytosis. This Dictyostelium discoideum (Social amoeba) protein is Protein SCAR (scrA).